Reading from the N-terminus, the 261-residue chain is 1-(5-phosphoribosyl)-5-[(5-phosphoribosylamino)methylideneamino] imidazole-4-carboxamide isomerase (261 aa).

Catalysis depends on D15, which acts as the Proton acceptor. D136 (proton donor) is an active-site residue.

It belongs to the HisA/HisF family.

The protein resides in the cytoplasm. It carries out the reaction 1-(5-phospho-beta-D-ribosyl)-5-[(5-phospho-beta-D-ribosylamino)methylideneamino]imidazole-4-carboxamide = 5-[(5-phospho-1-deoxy-D-ribulos-1-ylimino)methylamino]-1-(5-phospho-beta-D-ribosyl)imidazole-4-carboxamide. Its pathway is amino-acid biosynthesis; L-histidine biosynthesis; L-histidine from 5-phospho-alpha-D-ribose 1-diphosphate: step 4/9. This chain is 1-(5-phosphoribosyl)-5-[(5-phosphoribosylamino)methylideneamino] imidazole-4-carboxamide isomerase, found in Synechococcus sp. (strain JA-2-3B'a(2-13)) (Cyanobacteria bacterium Yellowstone B-Prime).